A 244-amino-acid polypeptide reads, in one-letter code: MLPFWIALQFLSSLPVRLPGMPTPNEMGRSLLFYPVVGLLFGLLLWLASHLLQGAPAPLHAALLLALWVLLSGALHLDGLADSADAWLGGFGDRERTLQIMKDPRSGPIAVVVLVLVLLLKFCALWVLVERGTGGWLVLAPVVGRAAMLGLFMGTPYVRKGGLGAALAEHLPRRAAGWVLLGSVLGCVVLGGSPGLWMLLLSLGVFLWLRRLMCKRLGGTTGDTAGAMVELLELAVLVGLALMV.

Helical transmembrane passes span Leu-31 to Leu-51, Ala-55 to Leu-75, Ile-109 to Val-129, Gly-134 to Gly-154, and Val-188 to Trp-208.

The protein belongs to the CobS family. Mg(2+) is required as a cofactor.

It localises to the cell inner membrane. It catalyses the reaction alpha-ribazole + adenosylcob(III)inamide-GDP = adenosylcob(III)alamin + GMP + H(+). It carries out the reaction alpha-ribazole 5'-phosphate + adenosylcob(III)inamide-GDP = adenosylcob(III)alamin 5'-phosphate + GMP + H(+). Its pathway is cofactor biosynthesis; adenosylcobalamin biosynthesis; adenosylcobalamin from cob(II)yrinate a,c-diamide: step 7/7. Joins adenosylcobinamide-GDP and alpha-ribazole to generate adenosylcobalamin (Ado-cobalamin). Also synthesizes adenosylcobalamin 5'-phosphate from adenosylcobinamide-GDP and alpha-ribazole 5'-phosphate. This is Adenosylcobinamide-GDP ribazoletransferase from Pseudomonas entomophila (strain L48).